Here is a 291-residue protein sequence, read N- to C-terminus: Hydroxysteroid 11-beta-dehydrogenase 1-like protein A (291 aa).

The first 18 residues, 1 to 18 (MAGVKLLLLSLCVGYTAY), serve as a signal peptide directing secretion. NADP(+) is bound by residues 40–66 (GSSTGIGEQIAYEFARMGAHIMVTARR), 91–92 (DM), and 118–120 (NHI). S170 serves as a coordination point for substrate. Y183 (proton acceptor) is an active-site residue. NADP(+) contacts are provided by residues 183–187 (YCASK) and 216–222 (GYIDTEN).

Belongs to the short-chain dehydrogenases/reductases (SDR) family.

It is found in the secreted. It carries out the reaction cortisone + NADPH + H(+) = cortisol + NADP(+). In terms of biological role, unidirectional NADP(+)-dependent cortisol dehydrogenase (in vitro). The chain is Hydroxysteroid 11-beta-dehydrogenase 1-like protein A (hsd11b1l-a) from Xenopus laevis (African clawed frog).